The sequence spans 685 residues: Twinkle mtDNA helicase (685 aa).

Residues 1 to 31 constitute a mitochondrion transit peptide; it reads MWLLLRRAYPLRILLPLRGEWVGRRGLPRSL. The interval 1–122 is contributes to single strand DNA binding activity; it reads MWLLLRRAYP…LCMTSLAEGS (122 aa). The tract at residues 54 to 214 is N-terminal region (NTR); that stretch reads PVTTTEIRQY…LVFPWFTPGS (161 aa). Positions 122–373 are required for hexamers formation and DNA helicase activity; it reads SWEDLQASVE…WHKSIVSFRQ (252 aa). The interval 215–335 is primase-like domain; the sequence is SGLRGLKLLG…LNPKRCSLVR (121 aa). Residues 385–636 form the SF4 helicase domain; it reads VEQAAGVRWS…LTFSIPPKSK (252 aa). A maybe required for stable oligomeric structure region spans residues 406 to 591; the sequence is HRKGELTVFT…QEADNVLILQ (186 aa). 416-423 serves as a coordination point for ATP; sequence GPTGSGKT. Residues 454–482 are a coiled coil; sequence RVMLTQFAVTRLEEQLDKYEEWADRFEDL. The tract at residues 641 to 685 is might negatively regulate ATPase activity; sequence KIKDDNGLVAKKSSSGKKGAAHQNPEICLGQDPSPAQPDTSKSSG. The disordered stretch occupies residues 642 to 685; sequence IKDDNGLVAKKSSSGKKGAAHQNPEICLGQDPSPAQPDTSKSSG.

In terms of assembly, homohexamer (via C-terminus), which assembles in a ring-like structure. Homoheptamer, which assembles in a ring-like structure. Homooctamer, which assembles in a ring-like structure. Oligomers may sequentially eject two monomers (octamer&gt;heptamer&gt;hexamer) upon DNA binding. Oligomerization is Mg(2+), nucleotide and DNA-independent, however, Mg(2+) and nucleotide stabilize the homohexameric form. Interacts with POLG in vitro. Interacts with LONP1. Ubiquitous with the highest levels in the liver, heart and kidneys. The skeletal muscle, brain and testis showed lower but detectable expression. Expression is coregulated with MRPL43.

The protein resides in the mitochondrion matrix. The protein localises to the mitochondrion nucleoid. It is found in the mitochondrion inner membrane. The enzyme catalyses ATP + H2O = ADP + phosphate + H(+). It catalyses the reaction Couples ATP hydrolysis with the unwinding of duplex DNA at the replication fork by translocating in the 5'-3' direction. This creates two antiparallel DNA single strands (ssDNA). The leading ssDNA polymer is the template for DNA polymerase III holoenzyme which synthesizes a continuous strand.. Its function is as follows. Mitochondrial helicase involved in mtDNA replication and repair. Might have a role in mtDNA repair. Has DNA strand separation activity needed to form a processive replication fork for leading strand synthesis which is catalyzed by the formation of a replisome complex with POLG and mtSDB. Preferentially unwinds DNA substrates with pre-existing 5'-and 3'- single-stranded tails but is also active on a 5'- flap substrate. Can dissociate the invading strand of immobile or mobile D-loop DNA structures irrespective of the single strand polarity of the third strand. In addition to its DNA strand separation activity, also has DNA strand annealing, DNA strand-exchange and DNA branch migration activities. This Mus musculus (Mouse) protein is Twinkle mtDNA helicase.